The following is a 479-amino-acid chain: GTPase Der (479 aa).

EngA-type G domains follow at residues 3–167 and 191–366; these read FTLA…EAAA and LQIA…ATWN. Residues 9 to 16, 56 to 60, 119 to 122, 197 to 204, 244 to 248, and 309 to 312 contribute to the GTP site; these read GRPNVGKS, DTAGL, NKAE, GRPNAGKS, DTAGM, and NKWD. The KH-like domain occupies 367-453; that stretch reads TRISTARLNQ…RLWMRSQADD (87 aa). A disordered region spans residues 449–479; sequence SQADDNPYKNRKKSTPSRLNKHVRKGETKKG. The span at 457–472 shows a compositional bias: basic residues; that stretch reads KNRKKSTPSRLNKHVR.

It belongs to the TRAFAC class TrmE-Era-EngA-EngB-Septin-like GTPase superfamily. EngA (Der) GTPase family. In terms of assembly, associates with the 50S ribosomal subunit.

Functionally, GTPase that plays an essential role in the late steps of ribosome biogenesis. In Jannaschia sp. (strain CCS1), this protein is GTPase Der.